The primary structure comprises 867 residues: G-protein coupled receptor family C group 6 member A (867 aa).

The first 19 residues, 1–19, serve as a signal peptide directing secretion; that stretch reads MDLMSFILLWAGLMKVAEA. Topologically, residues 20–566 are extracellular; sequence SIAQFSQLGA…EYFDWNSGFA (547 aa). N-linked (GlcNAc...) asparagine glycans are attached at residues Asn51, Asn55, Asn97, Asn296, Asn308, Asn336, Asn356, Asn370, Asn527, and Asn547. A helical transmembrane segment spans residues 567–587; that stretch reads IVLLILAALGVLLLFFMSALF. The Cytoplasmic segment spans residues 588 to 602; the sequence is FWQRHSPVVKAAGGP. A helical membrane pass occupies residues 603-623; it reads LCHLILVSLLGSFISVVFFVG. Topologically, residues 624–634 are extracellular; the sequence is EPSDLTCRARQ. Residues 635 to 655 form a helical membrane-spanning segment; that stretch reads VIFGFSFTLCVSCILVKSLKI. Topologically, residues 656-675 are cytoplasmic; sequence LLAFEMNFELKELLCMLYKP. Residues 676-696 traverse the membrane as a helical segment; the sequence is YMIVSVGMGVQIIICTVWLTL. At 697 to 716 the chain is on the extracellular side; that stretch reads YKPFKDKEVQTESILLECNE. Residues 717–737 form a helical membrane-spanning segment; sequence GFYVMFWLMLGYIALLALFCF. Residues 738–754 lie on the Cytoplasmic side of the membrane; the sequence is TFAYIGRKLPQKYNEAK. A helical transmembrane segment spans residues 755-775; it reads FITFSMVICLMAWIIFIPIHV. At 776–781 the chain is on the extracellular side; that stretch reads TTSGKY. A helical transmembrane segment spans residues 782–802; that stretch reads VPAVEMVVILISNYGILSCHF. Residues 803-867 lie on the Cytoplasmic side of the membrane; that stretch reads LPKSYIILFK…LSFVPEEKHE (65 aa).

It belongs to the G-protein coupled receptor 3 family. As to quaternary structure, homodimer; disulfide-linked.

The protein resides in the cell membrane. In terms of biological role, olfactory receptor that is activated by amino acids that act as potent odorants in fish. Displays preference for acidic amino acids such as Glu over basic amino acids. The polypeptide is G-protein coupled receptor family C group 6 member A (gprc6a) (Danio rerio (Zebrafish)).